The sequence spans 217 residues: tRNA (guanine-N(7)-)-methyltransferase (217 aa).

Positions 56, 81, 108, and 130 each coordinate S-adenosyl-L-methionine. The active site involves D130. Residues K134 and D166 each coordinate substrate.

It belongs to the class I-like SAM-binding methyltransferase superfamily. TrmB family.

The enzyme catalyses guanosine(46) in tRNA + S-adenosyl-L-methionine = N(7)-methylguanosine(46) in tRNA + S-adenosyl-L-homocysteine. It participates in tRNA modification; N(7)-methylguanine-tRNA biosynthesis. Functionally, catalyzes the formation of N(7)-methylguanine at position 46 (m7G46) in tRNA. In Neorickettsia sennetsu (strain ATCC VR-367 / Miyayama) (Ehrlichia sennetsu), this protein is tRNA (guanine-N(7)-)-methyltransferase.